A 440-amino-acid polypeptide reads, in one-letter code: Ribosomal protein uS12 methylthiotransferase RimO (440 aa).

Residues 5–116 (PTIAISHLGC…IVNVIERAEQ (112 aa)) form the MTTase N-terminal domain. [4Fe-4S] cluster is bound by residues C14, C50, C79, C154, C158, and C161. A Radical SAM core domain is found at 140–370 (TTTEGVAYLR…ALQQPISWRK (231 aa)). Residues 372 to 438 (QQEVGKTVEV…EYDLFGQVVS (67 aa)) enclose the TRAM domain.

Belongs to the methylthiotransferase family. RimO subfamily. The cofactor is [4Fe-4S] cluster.

Its subcellular location is the cytoplasm. It carries out the reaction L-aspartate(89)-[ribosomal protein uS12]-hydrogen + (sulfur carrier)-SH + AH2 + 2 S-adenosyl-L-methionine = 3-methylsulfanyl-L-aspartate(89)-[ribosomal protein uS12]-hydrogen + (sulfur carrier)-H + 5'-deoxyadenosine + L-methionine + A + S-adenosyl-L-homocysteine + 2 H(+). Catalyzes the methylthiolation of an aspartic acid residue of ribosomal protein uS12. This Trichormus variabilis (strain ATCC 29413 / PCC 7937) (Anabaena variabilis) protein is Ribosomal protein uS12 methylthiotransferase RimO.